A 103-amino-acid chain; its full sequence is Large ribosomal subunit protein bL21 (103 aa).

It belongs to the bacterial ribosomal protein bL21 family. In terms of assembly, part of the 50S ribosomal subunit. Contacts protein L20.

Functionally, this protein binds to 23S rRNA in the presence of protein L20. The chain is Large ribosomal subunit protein bL21 from Shewanella sediminis (strain HAW-EB3).